Consider the following 687-residue polypeptide: Glycine--tRNA ligase beta subunit (687 aa).

This sequence belongs to the class-II aminoacyl-tRNA synthetase family. Tetramer of two alpha and two beta subunits.

It localises to the cytoplasm. The catalysed reaction is tRNA(Gly) + glycine + ATP = glycyl-tRNA(Gly) + AMP + diphosphate. This Ruegeria sp. (strain TM1040) (Silicibacter sp.) protein is Glycine--tRNA ligase beta subunit.